The sequence spans 213 residues: Orotate phosphoribosyltransferase (213 aa).

Lys26 serves as a coordination point for 5-phospho-alpha-D-ribose 1-diphosphate. Orotate is bound at residue 34-35; that stretch reads FF. 5-phospho-alpha-D-ribose 1-diphosphate contacts are provided by residues 72-73, Arg99, Lys100, Lys103, His105, and 124-132; these read YK and DDVITAGTA. Thr128 and Arg156 together coordinate orotate.

This sequence belongs to the purine/pyrimidine phosphoribosyltransferase family. PyrE subfamily. Homodimer. Mg(2+) serves as cofactor.

The enzyme catalyses orotidine 5'-phosphate + diphosphate = orotate + 5-phospho-alpha-D-ribose 1-diphosphate. It functions in the pathway pyrimidine metabolism; UMP biosynthesis via de novo pathway; UMP from orotate: step 1/2. Functionally, catalyzes the transfer of a ribosyl phosphate group from 5-phosphoribose 1-diphosphate to orotate, leading to the formation of orotidine monophosphate (OMP). This Salmonella agona (strain SL483) protein is Orotate phosphoribosyltransferase.